A 31-amino-acid polypeptide reads, in one-letter code: Cytochrome b6-f complex subunit 6 (31 aa).

A helical membrane pass occupies residues 4-24; sequence VIAYLGLLASVLIGTIVIYLG.

The protein belongs to the PetL family. As to quaternary structure, the 4 large subunits of the cytochrome b6-f complex are cytochrome b6, subunit IV (17 kDa polypeptide, PetD), cytochrome f and the Rieske protein, while the 4 small subunits are PetG, PetL, PetM and PetN. The complex functions as a dimer.

The protein resides in the plastid. Its subcellular location is the chloroplast thylakoid membrane. Functionally, component of the cytochrome b6-f complex, which mediates electron transfer between photosystem II (PSII) and photosystem I (PSI), cyclic electron flow around PSI, and state transitions. PetL is important for photoautotrophic growth as well as for electron transfer efficiency and stability of the cytochrome b6-f complex. This chain is Cytochrome b6-f complex subunit 6, found in Oltmannsiellopsis viridis (Marine flagellate).